The sequence spans 372 residues: MAASVPWACCAVLAAAAAAVYTQKHSPQEAPHVQYERLGTDVTLPCGTASWDAAVTWRVNGTDLAPDLLNGSQLILRSLELGHSGLYACFHRDSWHLRHQVLLHVGLPPREPVLSCRSNTYPKGFYCSWHLSAPTYIPNTFNVTVLHGSKMMVCEKDPALKNRCHIRYMHLFSTIKYKVSISVSNALGHNTTAITFDEFTIVKPDPPENVVARPVPSNPRRLEVTWQTPSTWPDPESFPLKFFLRYRPLILDQWQHVELSNGTAHTITDAYAGKEYIIQVAAKDNEIGTWSDWSVAAHATPWTEEPRHLTTEAQAPETTTSTTSSLAPPPTTKICDPGELSSGGGPSIPFLTSVPVTLVLAAAAATANNLLI.

An N-terminal signal peptide occupies residues 1 to 22; sequence MAASVPWACCAVLAAAAAAVYT. The Ig-like C2-type domain maps to 27–104; it reads PQEAPHVQYE…WHLRHQVLLH (78 aa). Residues C46 and C89 are joined by a disulfide bond. N-linked (GlcNAc...) asparagine glycosylation is found at N60, N70, N142, N190, and N261. Fibronectin type-III domains lie at 108–205 and 206–306; these read PPRE…VKPD and PPEN…TEEP. The WSXWS motif motif lies at 290-294; sequence WSDWS. Positions 301–339 are disordered; it reads PWTEEPRHLTTEAQAPETTTSTTSSLAPPPTTKICDPGE. Residues 311–326 are compositionally biased toward low complexity; it reads TEAQAPETTTSTTSSL. A lipid anchor (GPI-anchor amidated serine) is attached at S342. Positions 343–372 are cleaved as a propeptide — removed in mature form; the sequence is GGGPSIPFLTSVPVTLVLAAAAATANNLLI.

This sequence belongs to the type I cytokine receptor family. Type 3 subfamily. Forms a heterotrimer with LIFR and IL6ST. Interacts with heterodimeric neurotropic cytokine composed of CLCF1/CLC and CRLF1/CLF-1. Either alone or in complex with the heterodimer CLCF1-CRLF1 interacts with SORL1; this interaction may promote internalization and lysosomal degradation. Nervous system.

It localises to the cell membrane. Its function is as follows. Binds to CNTF. The alpha subunit provides the receptor specificity. In Rattus norvegicus (Rat), this protein is Ciliary neurotrophic factor receptor subunit alpha (Cntfr).